The following is a 227-amino-acid chain: Deoxyribose-phosphate aldolase (227 aa).

D98 acts as the Proton donor/acceptor in catalysis. Residue K161 is the Schiff-base intermediate with acetaldehyde of the active site. K191 functions as the Proton donor/acceptor in the catalytic mechanism.

It belongs to the DeoC/FbaB aldolase family. DeoC type 1 subfamily.

Its subcellular location is the cytoplasm. It carries out the reaction 2-deoxy-D-ribose 5-phosphate = D-glyceraldehyde 3-phosphate + acetaldehyde. It participates in carbohydrate degradation; 2-deoxy-D-ribose 1-phosphate degradation; D-glyceraldehyde 3-phosphate and acetaldehyde from 2-deoxy-alpha-D-ribose 1-phosphate: step 2/2. Catalyzes a reversible aldol reaction between acetaldehyde and D-glyceraldehyde 3-phosphate to generate 2-deoxy-D-ribose 5-phosphate. This chain is Deoxyribose-phosphate aldolase, found in Frankia alni (strain DSM 45986 / CECT 9034 / ACN14a).